The following is a 265-amino-acid chain: MFLVDSHCHLDGLDYESLHKDVDDVLAKAAARDVKFCLAVATTLPGYLHMRDLVGERDNVVFSCGVHPLNQNDPYDVEDLRRLAAEEGVVALGETGLDYYYTPETKVRQQESFIHHIQIGRELNKPVIVHTRDARADTLAILREEKVTDCGGVLHCFTEDRETAGKLLDLGFYISFSGIVTFRNAEQLRDAARYVPLDRLLVETDSPYLAPVPHRGKENQPAMVRDVAEYMAVLKGVAVEELAQVTTDNFARLFHIDASRLQSIR.

A divalent metal cation contacts are provided by H7, H9, E94, H130, H155, and D205.

Belongs to the metallo-dependent hydrolases superfamily. TatD-type hydrolase family. A divalent metal cation serves as cofactor.

This is an uncharacterized protein from Escherichia coli O157:H7.